We begin with the raw amino-acid sequence, 1103 residues long: MELERNCMLYIYSSRGDAPSTAELQKKIESPNEATKAEGMQDLIIGMTQGEAYTRLLMTVIRYAMPSKDKRVKKLTQLYLEIVGKCRPDGSLKEEMILICNALRNDLMSPNEYVRGSTLRLLSKIRQFKVLEPLVEAILQNLTHRHSYVRRNAVMCVYSIVKNFGLDAIPATIDQIEQMLLSEGDLTTKRNAFLVLVHCASKRAIQFILQQRSEDGTGGLGFLLSSGDLFQLALLELLRKVCRQKQQQKAGLLRLIVSILPNTLPSVAYEGACSLLALSRAPVSLKAAAGAFASLLCGNSDNNVKLIVLDRLQECVQRASRRTMEEFVIDLLRGLQTPSLEVRRKILDLVLQIVGKNSVEQLLNVLKRELLRTAEPEQLTVPRTMEYRRLLIKAVHSCCTRFPEAAASVVNVLIDFPGDPDVTTATEVAVVVRELVATCVHLRSRIISRVVDAFPDSAHARVLRVSLWMLGEFCEDSELLDSFLTAVYAACSPLPFTSGDSGGAEGEQRSGCQPKLKMTTRTVVLEDGTYGTEDVYESVNEKGDSSAKAGKTALRKFILGGDFLLASTVAVTCAKLILKTSDEVHAQLAEEFERHREAVQEKAGRRTLTGDAQARETLLERQELEGKVAPVKLRASTEQKTRVLYLVACLLKFLRLSSSGAGAHSDAAIRVCQSLRALCGLMTGLEKEKAFVRHWVHHGRFALERVLALGPVSDDPFTWNLKDAEDEKTVSAPDDLAFFRQLRPDRQSLMVASEGVAAVGEDSLEEDEIYYSACAGLARGAELEEVDETEADLQLTVGGAGGTSPSLSGGNAKDDAALFQQRLAKVQPITGQADPLYVEAFLQVNQFDLLVEMLVVNRTQDSLQNVTVEPSTHGDLKLVERPAPVSLAPGQQAVLHAPIKVRSTEAGIILGYVTFSRRGSSDKECLVLNELHIDVLDYIERRWTCELAFRSMWAEFEWENKIHVNTSFTDVSEFLEHLMKMTNLTVVGFRPPASVMRRLKFSAACAGLDEAERAAGDGEEDEDRYLQSVRKIPTLRKLSESSSFFAVNLYSRSIFGEDALVNVSIEKLPGGKLAGSIRIRSRTQGIALSLGDRITVVQRGLTK.

HEAT repeat units lie at residues 51 to 89 (EAYTRLLMTVIRYAMPSKDKRVKKLTQLYLEIVGKCRPD), 94 to 129 (EEMILICNALRNDLMSPNEYVRGSTLRLLSKIRQFK), 130 to 166 (VLEPLVEAILQNLTHRHSYVRRNAVMCVYSIVKNFGL), 247 to 284 (QQKAGLLRLIVSILPNTLPSVAYEGACSLLALSRAPVS), 322 to 359 (RTMEEFVIDLLRGLQTPSLEVRRKILDLVLQIVGKNSV), 365 to 404 (VLKRELLRTAEPEQLTVPRTMEYRRLLIKAVHSCCTRFPE), and 405 to 441 (AAASVVNVLIDFPGDPDVTTATEVAVVVRELVATCVH).

As to quaternary structure, oligomeric complex that consists of at least the alpha, beta, beta', gamma, delta, epsilon and zeta subunits.

The protein resides in the cytoplasm. It is found in the golgi apparatus membrane. The protein localises to the cytoplasmic vesicle. It localises to the COPI-coated vesicle membrane. Functionally, the coatomer is a cytosolic protein complex that binds to dilysine motifs and reversibly associates with Golgi non-clathrin-coated vesicles, which further mediate biosynthetic protein transport from the ER, via the Golgi up to the trans Golgi network. Coatomer complex is required for budding from Golgi membranes, and is essential for the retrograde Golgi-to-ER transport of dilysine-tagged proteins. The protein is Coatomer subunit beta of Toxoplasma gondii.